The sequence spans 263 residues: L-histidine 2-aminobutanoyltransferase (263 aa).

It belongs to the methyltransferase superfamily. CntL family.

It catalyses the reaction L-histidine + S-adenosyl-L-methionine = (2S)-2-amino-4-{[(1S)-1-carboxy-2-(1H-imidazol-4-yl)ethyl]amino}butanoate + S-methyl-5'-thioadenosine + H(+). Functionally, catalyzes the nucleophilic attack of one alpha-aminobutanoate moiety from SAM onto L-histidine to produce the intermediate (2S)-2-amino-4-{[(1S)-1-carboxy-2-(1H-imidazol-4-yl)ethyl]amino}butanoate. Functions in the biosynthesis of the metallophore pseudopaline, which is involved in the acquisition of nickel and zinc, and thus enables bacterial growth inside the host, where metal access is limited. Therefore, this enzyme probably contributes to Pseudomonas virulence. Appears to be specific for L-histidine as substrate. The protein is L-histidine 2-aminobutanoyltransferase of Pseudomonas aeruginosa (strain ATCC 15692 / DSM 22644 / CIP 104116 / JCM 14847 / LMG 12228 / 1C / PRS 101 / PAO1).